Here is a 607-residue protein sequence, read N- to C-terminus: Karyogamy meiotic segregation protein 1 (607 aa).

A disordered region spans residues 83-135 (DDSFANQAEKPSMEQQNSKNSIKEDANEHSVNSAHSKSSSNASPESLNPSQMM). Over residues 111 to 132 (HSVNSAHSKSSSNASPESLNPS) the composition is skewed to low complexity.

Interacts with mcp1 and sad1.

Its subcellular location is the cytoplasm. The protein localises to the cytoskeleton. It is found in the microtubule organizing center. It localises to the spindle pole body. Its function is as follows. Has a role in karyogamy, recombination and segregation during meiosis. Although it has been shown to associate with the spindle pole body it is unlikely to be involved in its formation or maintenance. In Schizosaccharomyces pombe (strain 972 / ATCC 24843) (Fission yeast), this protein is Karyogamy meiotic segregation protein 1 (kms1).